A 1106-amino-acid chain; its full sequence is Inversin (1106 aa).

16 ANK repeats span residues 13–42 (SLASEVHAAAVNGDKSTLLKLIAGNSELKD), 47–76 (FGRTPLMYCVLADRVDCAEALLKAGADVNR), 80–110 (SRRTALHLAAQKGNYRFMKLLLARRGNWMQK), 113–144 (EGMTPLHLTTRHKSPKCLALLLKHMAPGEVDT), 148–177 (NKQTALHWSAYYNNPEHVKLLIKHDSNIGI), 181–213 (EGKIPLHWAANNKDPSAIHTVKCILEAAPTESL), 220–250 (EGRTPLHFAVADGNVAVVDVLTSYEGCNVTS), 254–285 (LFRTPLHWAALLGHAQIVHLLLERNKFGTIPS), 288–317 (QGATPLHYAAQSNFAETVEVFLKHPSVKDD), 321–350 (EGRTSFMWAAGKGSDNVIRTMLDLKLDIDI), 356–385 (YAGTALHAAALSGHVSTVKLLLERNAQVDA), 389–418 (MKHTPLFRACEMGHKEVIQTLIKGGARVDL), 422–451 (DGHSPLHWAALGGNADVCQILIENKINPNV), 455–484 (AGRTPLQCAAYGGYINCMVVLLENNADPNI), 488–517 (EGRTALHWLCNNGYLDAIKLLLGFDAFPNH), and 523–553 (ERYTPLDYALLGEHHEVIQFMLEHGALSIAA). Positions 490–498 (RTALHWLCN) match the D-box 1 motif. Residues 555 to 584 (QDIAAFKIQAVYKGYKVRKAFQERKNLLMK) form the IQ 1 domain. Basic and acidic residues predominate over residues 589–607 (RKDAAAKKREEESKRKEAS). Disordered regions lie at residues 589–615 (RKDAAAKKREEESKRKEASLQKGMQNM), 636–688 (LQLS…ELQS), 746–782 (ANGTSAHGNRRHASACGTAGAGEKTRDQSLSSSGNRG), and 809–833 (AVPKSKRHQQKSRHKEVNYERCSPA). Composition is skewed to polar residues over residues 636 to 645 (LQLSNKQTDL) and 653 to 666 (VSASQIQLGRNSRG). A compositionally biased stretch (basic residues) spans 812 to 822 (KSKRHQQKSRH). A D-box 2 motif is present at residues 944 to 952 (RKELFRKKN). One can recognise an IQ 2 domain in the interval 951 to 980 (KNYAATVIQRTWRSYRLRQELSQLLSAKRQ).

Binds calmodulin via its IQ domains. Interacts with APC2.

The protein localises to the cytoplasm. The protein resides in the cytoskeleton. Required for normal renal development and establishment of left-right axis. Probably acts as a molecular switch between different Wnt signaling pathways. Inhibits the canonical Wnt pathway by targeting cytoplasmic disheveled for degradation by the ubiquitin-proteasome. This suggests that it is required in renal development to oppose the repression of terminal differentiation of tubular epithelial cells by Wnt signaling. The sequence is that of Inversin (INVS) from Gallus gallus (Chicken).